Here is a 734-residue protein sequence, read N- to C-terminus: Probable inactive histone-lysine N-methyltransferase SUVR1 (734 aa).

Residues 61–163 form a disordered region; it reads QSTEKNKKEE…LPPLKRYVRR (103 aa). Positions 62–81 are enriched in basic and acidic residues; it reads STEKNKKEEEKKKKEEEKKS. Residues 98–109 are compositionally biased toward acidic residues; the sequence is VQDEEDDMDEDE. Positions 113-122 are enriched in basic residues; sequence KRRLRSRRGR. A compositionally biased stretch (low complexity) spans 123–132; it reads ASSSSSSSSS. The Zn(2+) site is built by Cys460, Cys464, Cys468, Cys477, Cys545, Cys549, Cys551, and Cys555. A Pre-SET domain is found at 460–563; that stretch reads CSTSCIEDCL…RCGNRVVQRG (104 aa). The SET domain occupies 566-696; the sequence is NKLQVFFTPN…AMEELAWDYG (131 aa). S-adenosyl-L-methionine contacts are provided by residues 577–579 and 652–653; these read KGW and NH. Residue Cys655 participates in Zn(2+) binding. An S-adenosyl-L-methionine-binding site is contributed by Tyr695. The 17-residue stretch at 707-723 folds into the Post-SET domain; sequence KPFDCLCGSRFCRNKKR. Positions 711, 713, and 718 each coordinate Zn(2+).

This sequence belongs to the class V-like SAM-binding methyltransferase superfamily. Histone-lysine methyltransferase family. Interacts with SUVR2 and itself.

It localises to the nucleus. It is found in the chromosome. Its function is as follows. Probable inactive histone-lysine methyltransferase that acts as regulator of transctiptional gene silencing independently of histone H3K9 methylation. Contributes to transcriptional gene silencing at RNA-directed DNA methylation (RdDM) target loci but also at RdDM-independent target loci. The protein is Probable inactive histone-lysine N-methyltransferase SUVR1 (SUVR1) of Arabidopsis thaliana (Mouse-ear cress).